The sequence spans 409 residues: tRNA (guanine-N(7)-)-methyltransferase non-catalytic subunit wuho (409 aa).

A disordered region spans residues 48–72; the sequence is DADSDSDEESTQQPQKPPTNGNGTA. The span at 58 to 72 shows a compositional bias: polar residues; it reads TQQPQKPPTNGNGTA. WD repeat units lie at residues 72 to 111, 122 to 161, 167 to 206, and 210 to 252; these read ADNV…DETN, MVSR…CKKP, GHMS…SIET, and GHGE…EVAR.

It belongs to the WD repeat TRM82 family. As to quaternary structure, forms a heterodimer with the catalytic subunit.

Its subcellular location is the nucleus. It participates in tRNA modification; N(7)-methylguanine-tRNA biosynthesis. Its function is as follows. Required for the formation of N(7)-methylguanine at position 46 (m7G46) in tRNA. In the complex, it is required to stabilize and induce conformational changes of the catalytic subunit. This is tRNA (guanine-N(7)-)-methyltransferase non-catalytic subunit wuho from Aedes aegypti (Yellowfever mosquito).